A 714-amino-acid polypeptide reads, in one-letter code: Centromere/kinetochore protein zw10 (714 aa).

It belongs to the ZW10 family.

It is found in the cytoplasm. It localises to the nucleus. The protein resides in the chromosome. The protein localises to the centromere. Its subcellular location is the kinetochore. In terms of biological role, required for accurate chromosome segregation. The protein is Centromere/kinetochore protein zw10 (mit(1)15) of Drosophila grimshawi (Hawaiian fruit fly).